The primary structure comprises 559 residues: Actin-binding protein WASF1 (559 aa).

Disordered regions lie at residues 169–202 (TEDK…DRRR), 307–400 (RPQS…SPPV), and 412–492 (VHPL…STLP). The segment covering 182–202 (KNLDRPHEPEKVPRAPHDRRR) has biased composition (basic and acidic residues). The segment covering 322-332 (PTPPPPPPPLP) has biased composition (pro residues). A compositionally biased stretch (low complexity) spans 333 to 346 (SALSTSSLRASMTS). Arg-341 is modified (asymmetric dimethylarginine; alternate). An Omega-N-methylarginine; alternate modification is found at Arg-341. Composition is skewed to pro residues over residues 347–374 (TPPP…PPAP), 384–399 (PAPP…PSPP), 423–437 (LPPP…PPGI), and 458–477 (TPSP…PPSQ). Ser-489 carries the post-translational modification Phosphoserine. The WH2 domain maps to 497–514 (ARSVLLEAIRKGIQLRKV).

This sequence belongs to the SCAR/WAVE family. As to quaternary structure, component of the WAVE1 complex composed of ABI2, CYFIP1 or CYFIP2, BRK1, NCKAP1 and WASF1/WAVE1. Within the complex, a heterodimer containing NCKAP1 and CYFIP1 interacts with a heterotrimer formed by WAVE1, ABI2 and BRK1. CYFIP2 binds to activated RAC1 which causes the complex to dissociate, releasing activated WASF1. The complex can also be activated by NCK1. Binds actin and the Arp2/3 complex. Interacts with BAIAP2. Interacts with SHANK3; the interaction mediates the association of SHANK3 with the WAVE1 complex. Interacts with ABI1 (via N-terminus). Interacts with SORBS2; this interaction greatly enhances phosphorylation by ABL1 and dephosphorylation by PTPN12 and might mediate partial to focal adhesion sites. As to expression, expressed in hippocampal neurons (at protein level).

The protein localises to the cytoplasm. Its subcellular location is the cytoskeleton. It localises to the synapse. It is found in the cell junction. The protein resides in the focal adhesion. Its function is as follows. Downstream effector molecule involved in the transmission of signals from tyrosine kinase receptors and small GTPases to the actin cytoskeleton. Promotes formation of actin filaments. Part of the WAVE complex that regulates lamellipodia formation. The WAVE complex regulates actin filament reorganization via its interaction with the Arp2/3 complex. As component of the WAVE1 complex, required for BDNF-NTRK2 endocytic trafficking and signaling from early endosomes. Also involved in the regulation of mitochondrial dynamics. The polypeptide is Actin-binding protein WASF1 (Wasf1) (Rattus norvegicus (Rat)).